A 425-amino-acid chain; its full sequence is MVILLQFYKEENFKKTEIGEIPEDWEVRELKDILEVIRNGLTAKQNKDKIGYPITRIETISDSKIDITKLGYVEDIKQEDIAKYRLIIGDILFSHINSEEHIGKVAIYEGKPEFLLHGMNLLLLRPNKNKIEPYYLLYLLRHFKQKNIFKYIAKRAVNQSSINQTQLKHLKIPLPPLEEQKQIAKILSDFDNLIGTINKQIEVLNKAKKGMMKKLFTKGVFEHKSFKKSEIGEIPEDWEVVELGNEKYFKIIMGQSPPSSSYNKEGEGVPFLQGKAEFGNIYPNPVLYTNKPLKVVDDEDILISVRAPVGDVNIAPFKLCIGRGLAGIKSNKEKVDNFFVFYYLSYIKPKIEYLGGGAVFKAITKKDLESIKIPLPPLEEQKAIAKRLKAIDDLIEIKRKEKEQIEKAKKKIMNLLLTGKIRVKT.

Belongs to the type-I restriction system S methylase family.

Its function is as follows. A putative specificity (S) subunit of a type I restriction enzyme thought to recognize 5'-TAGN(6)TGC-3'; the other subunits are unknown. The chain is Putative type I restriction enzyme MjaX specificity subunit from Methanocaldococcus jannaschii (strain ATCC 43067 / DSM 2661 / JAL-1 / JCM 10045 / NBRC 100440) (Methanococcus jannaschii).